The primary structure comprises 220 residues: Small ribosomal subunit protein uS3c (220 aa).

A KH type-2 domain is found at 43–120; that stretch reads IQHYVEKNTR…RLNIAIIRVA (78 aa).

It belongs to the universal ribosomal protein uS3 family. In terms of assembly, part of the 30S ribosomal subunit.

Its subcellular location is the plastid. The protein localises to the chloroplast. In Piper cenocladum (Ant piper), this protein is Small ribosomal subunit protein uS3c (rps3).